The sequence spans 237 residues: Ribosomal RNA small subunit methyltransferase G (237 aa).

Residues Gly-78, Phe-83, 129–130, and Arg-148 each bind S-adenosyl-L-methionine; that span reads AE. The disordered stretch occupies residues 218-237; the sequence is KKETPNKYPRKAGMPNKRPL.

It belongs to the methyltransferase superfamily. RNA methyltransferase RsmG family.

It is found in the cytoplasm. In terms of biological role, specifically methylates the N7 position of a guanine in 16S rRNA. The protein is Ribosomal RNA small subunit methyltransferase G of Streptococcus pneumoniae (strain ATCC BAA-255 / R6).